We begin with the raw amino-acid sequence, 314 residues long: 3'-5' exoribonuclease YhaM (314 aa).

Positions 163 to 279 constitute an HD domain; that stretch reads HVVSMLDLAK…LHYIDNLDAK (117 aa).

The protein belongs to the YhaM family.

Its function is as follows. Shows a 3'-5' exoribonuclease activity. This is 3'-5' exoribonuclease YhaM from Bacillus cereus (strain AH820).